A 213-amino-acid chain; its full sequence is Ribonuclease HII (213 aa).

The 196-residue stretch at 18-213 (GLHAGVDEVG…RPVKERLAKR (196 aa)) folds into the RNase H type-2 domain. Residues Asp24, Glu25, and Asp116 each coordinate a divalent metal cation.

Belongs to the RNase HII family. Mn(2+) serves as cofactor. The cofactor is Mg(2+).

The protein resides in the cytoplasm. It catalyses the reaction Endonucleolytic cleavage to 5'-phosphomonoester.. Functionally, endonuclease that specifically degrades the RNA of RNA-DNA hybrids. This is Ribonuclease HII from Shewanella woodyi (strain ATCC 51908 / MS32).